Consider the following 393-residue polypeptide: uncharacterized protein (393 aa).

The [4Fe-4S] cluster site is built by Cys-72, Cys-82, Cys-85, and Cys-160. Residues Gln-215, Phe-245, Glu-267, and Asp-313 each coordinate S-adenosyl-L-methionine. Cys-340 (nucleophile) is an active-site residue.

This sequence belongs to the class I-like SAM-binding methyltransferase superfamily. RNA M5U methyltransferase family.

This is an uncharacterized protein from Nitrosomonas europaea (strain ATCC 19718 / CIP 103999 / KCTC 2705 / NBRC 14298).